A 488-amino-acid chain; its full sequence is UDP-N-acetylmuramate--L-alanine ligase (488 aa).

129–135 (GTHGKTT) provides a ligand contact to ATP.

The protein belongs to the MurCDEF family.

The protein localises to the cytoplasm. The catalysed reaction is UDP-N-acetyl-alpha-D-muramate + L-alanine + ATP = UDP-N-acetyl-alpha-D-muramoyl-L-alanine + ADP + phosphate + H(+). It participates in cell wall biogenesis; peptidoglycan biosynthesis. In terms of biological role, cell wall formation. The protein is UDP-N-acetylmuramate--L-alanine ligase of Chromohalobacter salexigens (strain ATCC BAA-138 / DSM 3043 / CIP 106854 / NCIMB 13768 / 1H11).